The chain runs to 332 residues: RNA polymerase II holoenzyme cyclin-like subunit (332 aa).

The Cyclin N-terminal domain occupies 74–175 (RIYCYFLIMK…LIEELQSYMI (102 aa)).

The protein belongs to the cyclin family. Cyclin C subfamily. Component of the SRB8-11 complex, a regulatory module of the Mediator complex.

Its subcellular location is the nucleus. Functionally, component of the SRB8-11 complex. The SRB8-11 complex is a regulatory module of the Mediator complex which is itself involved in regulation of basal and activated RNA polymerase II-dependent transcription. The SRB8-11 complex may be involved in the transcriptional repression of a subset of genes regulated by Mediator. It may inhibit the association of the Mediator complex with RNA polymerase II to form the holoenzyme complex. The SRB8-11 complex phosphorylates the C-terminal domain (CTD) of the largest subunit of RNA polymerase II. This Eremothecium gossypii (strain ATCC 10895 / CBS 109.51 / FGSC 9923 / NRRL Y-1056) (Yeast) protein is RNA polymerase II holoenzyme cyclin-like subunit (SSN8).